The primary structure comprises 196 residues: N-(5'-phosphoribosyl)anthranilate isomerase (196 aa).

Belongs to the TrpF family.

It carries out the reaction N-(5-phospho-beta-D-ribosyl)anthranilate = 1-(2-carboxyphenylamino)-1-deoxy-D-ribulose 5-phosphate. Its pathway is amino-acid biosynthesis; L-tryptophan biosynthesis; L-tryptophan from chorismate: step 3/5. This chain is N-(5'-phosphoribosyl)anthranilate isomerase, found in Nitratiruptor sp. (strain SB155-2).